The primary structure comprises 274 residues: MPVVKTKPTSPGRRHVVAVTNPSLHKGAPLASLTEKKRKNGGRNNAGRITVRHQGGGHKQLYRVIDFKRTKDGIPAVVERLEYDPNRTAHIALLKYADGERRYIIAPKGVSVGDAIASGQEAPIRVGSCLPLRNIPVGSVVHCIEMKPGKGAQIARSAGASAQVVAREGAYATIRLRSGEMRKVLVECRATLGEVSNSENNLRVYGKAGAKRWRGVRPTVRGTAMNPVDHPHGGGEGRNFGKHPVTPWGVPTKGYKTRKNKRTDKMIVRRRKAK.

The segment at 221–256 (RGTAMNPVDHPHGGGEGRNFGKHPVTPWGVPTKGYK) is disordered.

Belongs to the universal ribosomal protein uL2 family. In terms of assembly, part of the 50S ribosomal subunit. Forms a bridge to the 30S subunit in the 70S ribosome.

In terms of biological role, one of the primary rRNA binding proteins. Required for association of the 30S and 50S subunits to form the 70S ribosome, for tRNA binding and peptide bond formation. It has been suggested to have peptidyltransferase activity; this is somewhat controversial. Makes several contacts with the 16S rRNA in the 70S ribosome. This Hahella chejuensis (strain KCTC 2396) protein is Large ribosomal subunit protein uL2.